A 262-amino-acid chain; its full sequence is Hydroxyethylthiazole kinase (262 aa).

Substrate is bound at residue Met-50. ATP contacts are provided by Arg-125 and Thr-171. Residue Gly-198 participates in substrate binding.

It belongs to the Thz kinase family. It depends on Mg(2+) as a cofactor.

It catalyses the reaction 5-(2-hydroxyethyl)-4-methylthiazole + ATP = 4-methyl-5-(2-phosphooxyethyl)-thiazole + ADP + H(+). It functions in the pathway cofactor biosynthesis; thiamine diphosphate biosynthesis; 4-methyl-5-(2-phosphoethyl)-thiazole from 5-(2-hydroxyethyl)-4-methylthiazole: step 1/1. Catalyzes the phosphorylation of the hydroxyl group of 4-methyl-5-beta-hydroxyethylthiazole (THZ). In Shigella flexneri serotype 5b (strain 8401), this protein is Hydroxyethylthiazole kinase.